An 81-amino-acid chain; its full sequence is UPF0180 protein BLi01634/BL05144 (81 aa).

This sequence belongs to the UPF0180 family.

The polypeptide is UPF0180 protein BLi01634/BL05144 (Bacillus licheniformis (strain ATCC 14580 / DSM 13 / JCM 2505 / CCUG 7422 / NBRC 12200 / NCIMB 9375 / NCTC 10341 / NRRL NRS-1264 / Gibson 46)).